We begin with the raw amino-acid sequence, 882 residues long: Valine--tRNA ligase (882 aa).

A 'HIGH' region motif is present at residues 45-55 (PNVTGKLHLGH). A 'KMSKS' region motif is present at residues 519–523 (KMSKS). Lysine 522 serves as a coordination point for ATP. Residues 808–882 (LADLLNVEEE…RIAEMQKLVK (75 aa)) adopt a coiled-coil conformation.

Belongs to the class-I aminoacyl-tRNA synthetase family. ValS type 1 subfamily. As to quaternary structure, monomer.

The protein localises to the cytoplasm. It carries out the reaction tRNA(Val) + L-valine + ATP = L-valyl-tRNA(Val) + AMP + diphosphate. Catalyzes the attachment of valine to tRNA(Val). As ValRS can inadvertently accommodate and process structurally similar amino acids such as threonine, to avoid such errors, it has a 'posttransfer' editing activity that hydrolyzes mischarged Thr-tRNA(Val) in a tRNA-dependent manner. This chain is Valine--tRNA ligase, found in Streptococcus pyogenes serotype M3 (strain ATCC BAA-595 / MGAS315).